The chain runs to 295 residues: Golgi-associated RAB2 interactor protein 1A (295 aa).

The tract at residues 187 to 206 is disordered; the sequence is MPNSSTETTPESSRPASSQS. The span at 190 to 206 shows a compositional bias: low complexity; that stretch reads SSTETTPESSRPASSQS. Residues Ser220, Ser221, Ser251, and Ser255 each carry the phosphoserine modification.

This sequence belongs to the GARIN family. As to quaternary structure, interacts (via N-terminus) with RAB2B (in GTP-bound form).

The protein resides in the golgi apparatus. RAB2B effector protein required for accurate acrosome formation and normal male fertility. This chain is Golgi-associated RAB2 interactor protein 1A (Garin1a), found in Rattus norvegicus (Rat).